The sequence spans 237 residues: Thrombin-like enzyme agkihpin-1 (237 aa).

Met-1 is a propeptide. In terms of domain architecture, Peptidase S1 spans 2–228 (ILGDDECNIN…HLDWIENIIA (227 aa)). A disulfide bridge links Cys-27 with Cys-43. His-42 (charge relay system) is an active-site residue. N-linked (GlcNAc...) asparagine glycosylation is present at Asn-80. The Charge relay system role is filled by Asp-87. Disulfide bonds link Cys-119-Cys-189, Cys-151-Cys-168, and Cys-179-Cys-204. Residue Ser-183 is the Charge relay system of the active site.

This sequence belongs to the peptidase S1 family. Snake venom subfamily. In terms of tissue distribution, expressed by the venom gland.

It is found in the secreted. With respect to regulation, the hydrolysis of TAMe (tosyl-arginine methyl ester) substrate is activated by Ca(2+), Fe(3+), Mg(2+) and Zn(2+), and inhibited by EDTA, PMSF and DTT. In terms of biological role, thrombin-like enzyme that shows fibrinogenolytic activity against bovine fibrinogen alpha and beta chains, but not gamma chain. Hydrolyzes fibrin. Enhances ADP-induced human platelet aggregation. Has arginine esterase activity for TAMe (tosyl-arginine methyl ester) substrate. Reduces thrombin-induced thrombosis. Does not have hemorrhagic activity. Reduces the motility of human liver cancer HepG2 cells in a wound-healing assay. This is Thrombin-like enzyme agkihpin-1 from Gloydius halys (Chinese water mocassin).